The chain runs to 145 residues: Deoxyuridine 5'-triphosphate nucleotidohydrolase (145 aa).

Residues 65–67 (RSG), Asn-78, 82–84 (TID), and Met-92 contribute to the substrate site.

Belongs to the dUTPase family. It depends on Mg(2+) as a cofactor.

The enzyme catalyses dUTP + H2O = dUMP + diphosphate + H(+). Its pathway is pyrimidine metabolism; dUMP biosynthesis; dUMP from dCTP (dUTP route): step 2/2. Functionally, this enzyme is involved in nucleotide metabolism: it produces dUMP, the immediate precursor of thymidine nucleotides and it decreases the intracellular concentration of dUTP so that uracil cannot be incorporated into DNA. The protein is Deoxyuridine 5'-triphosphate nucleotidohydrolase of Chlorobium phaeobacteroides (strain BS1).